We begin with the raw amino-acid sequence, 430 residues long: Inactive metallocarboxypeptidase ECM14 (430 aa).

An N-terminal signal peptide occupies residues 1–24 (MLHMNSLWGCFLFVLLAVTGAVQG). A propeptide spanning residues 25–105 (LQEDYSEYAV…TLPTSQMMAR (81 aa)) is cleaved from the precursor. Asn41 is a glycosylation site (N-linked (GlcNAc...) asparagine). In terms of domain architecture, Peptidase M14 spans 120–425 (EYRDLDTIYM…AALKYFCDFL (306 aa)). Zn(2+) is bound by residues His182 and Glu185. Residues 182–185 (HARE), Arg240, and 257–258 (DH) each bind substrate. A disulfide bridge links Cys251 with Cys272. Asn295 carries an N-linked (GlcNAc...) asparagine glycan. Position 310 (His310) interacts with Zn(2+). 311–312 (SY) contributes to the substrate binding site.

The protein belongs to the peptidase M14 family. Requires Zn(2+) as cofactor. In terms of processing, N-glycosylated.

It is found in the vacuole. Its subcellular location is the secreted. Inactive carboxypeptidase that may play a role in cell wall organization and biogenesis. The chain is Inactive metallocarboxypeptidase ECM14 from Saccharomyces cerevisiae (strain ATCC 204508 / S288c) (Baker's yeast).